A 155-amino-acid chain; its full sequence is MPHPLLPELEQLTQRVAGLQGFELCGIQLLTHMNPITLQVQIRHTSGSDVNLDDCAGFSGVLGEALEESQQLVEAYVLEISSPGIGEQLSCDRDFQTFRGFPVDVTHRDQGNVEHRLEGLLHERNTDSLQINIRGRIKSIPRDQVIEVRLTTPGQ.

This sequence belongs to the RimP family.

It is found in the cytoplasm. Functionally, required for maturation of 30S ribosomal subunits. This Synechococcus sp. (strain CC9902) protein is Ribosome maturation factor RimP.